The following is a 752-amino-acid chain: Glutamate carboxypeptidase 2 (752 aa).

Residues 1-19 (MWNAQQDSDSAEALGRRQR) lie on the Cytoplasmic side of the membrane. S10 carries the phosphoserine modification. Residues 20–44 (WFCAGTLVLAFTGTFIIGFLFGWFI) form a helical; Signal-anchor for type II membrane protein membrane-spanning segment. Topologically, residues 45–752 (KPSNDSTSSV…AAAETLREVD (708 aa)) are extracellular. N-linked (GlcNAc...) asparagine glycosylation is found at N48, N78, N123, N155, and N197. Substrate is bound by residues R212 and N259. Ca(2+) is bound by residues T271 and Y274. The NAALADase stretch occupies residues 276-589 (ANEYAYRHEF…QVRGAMVFEL (314 aa)). An N-linked (GlcNAc...) asparagine glycan is attached at N338. Residues H379 and D389 each coordinate Zn(2+). E426 provides a ligand contact to substrate. Residue E426 is the Nucleophile; for NAALADase activity of the active site. E427 provides a ligand contact to Zn(2+). Ca(2+) contacts are provided by E435 and E438. A Zn(2+)-binding site is contributed by D455. N-linked (GlcNAc...) asparagine glycosylation is found at N461 and N478. Residues 519 to 520 (SG), N521, 536 to 538 (RAR), Y554, and 554 to 555 (YH) contribute to the substrate site. Zn(2+) is bound at residue H555. N615 carries N-linked (GlcNAc...) asparagine glycosylation. Residue S630 is the Charge relay system of the active site. A glycan (N-linked (GlcNAc...) asparagine) is linked at N640. Residues D668 and H691 each act as charge relay system in the active site. Position 701–702 (701–702 (KY)) interacts with substrate.

Belongs to the peptidase M28 family. M28B subfamily. As to quaternary structure, homodimer. Requires Zn(2+) as cofactor. In terms of tissue distribution, widely expressed throughout brain regions with highest levels in the hippocampus, dentate gyrus, priform cortex, choroid plexus of ventricles, pineal gland, anterior lobe of the pituitary gland and supraoptic nucleus. High levels also found in the cerebral cortex, substantia nigra, pontine nucleus and the granule cell layer of cerebellum. Highly expressed in astrocytes and non-myelinating Schwann cells. Also expressed in kidney, localizing to the proximal brush border of the renal tube.

It localises to the cell membrane. The catalysed reaction is Release of an unsubstituted, C-terminal glutamyl residue, typically from Ac-Asp-Glu or folylpoly-gamma-glutamates.. With respect to regulation, the NAALADase activity is inhibited by beta-NAAG, quisqualic acid and 2-(phosphonomethyl)glutaric acid (PMG). In terms of biological role, has both folate hydrolase and N-acetylated-alpha-linked-acidic dipeptidase (NAALADase) activity. Has a preference for tri-alpha-glutamate peptides. In the intestine, required for the uptake of folate. In the brain, modulates excitatory neurotransmission through the hydrolysis of the neuropeptide, N-aceylaspartylglutamate (NAAG), thereby releasing glutamate. Also exhibits a dipeptidyl-peptidase IV type activity. In vitro, cleaves Gly-Pro-AMC. This is Glutamate carboxypeptidase 2 (Folh1) from Rattus norvegicus (Rat).